The sequence spans 206 residues: Small ribosomal subunit protein uS4 (206 aa).

The S4 RNA-binding domain maps to 96-156; sequence SRLDNVVYRM…EKSKKQVRIA (61 aa).

The protein belongs to the universal ribosomal protein uS4 family. In terms of assembly, part of the 30S ribosomal subunit. Contacts protein S5. The interaction surface between S4 and S5 is involved in control of translational fidelity.

Functionally, one of the primary rRNA binding proteins, it binds directly to 16S rRNA where it nucleates assembly of the body of the 30S subunit. In terms of biological role, with S5 and S12 plays an important role in translational accuracy. The sequence is that of Small ribosomal subunit protein uS4 from Laribacter hongkongensis (strain HLHK9).